The sequence spans 193 residues: Potassium-transporting ATPase KdpC subunit (193 aa).

A helical transmembrane segment spans residues 7–27 (PLVVLFVILTAVTGLAYPAVM).

The protein belongs to the KdpC family. In terms of assembly, the system is composed of three essential subunits: KdpA, KdpB and KdpC.

It is found in the cell inner membrane. Part of the high-affinity ATP-driven potassium transport (or Kdp) system, which catalyzes the hydrolysis of ATP coupled with the electrogenic transport of potassium into the cytoplasm. This subunit acts as a catalytic chaperone that increases the ATP-binding affinity of the ATP-hydrolyzing subunit KdpB by the formation of a transient KdpB/KdpC/ATP ternary complex. The sequence is that of Potassium-transporting ATPase KdpC subunit from Burkholderia cenocepacia (strain ATCC BAA-245 / DSM 16553 / LMG 16656 / NCTC 13227 / J2315 / CF5610) (Burkholderia cepacia (strain J2315)).